The chain runs to 834 residues: MTTTSKIINDGEGEDVKGNKNINKKSLIDENRLDEKKDLLSDKVESKTHCSVKRMAVLTSGGDSSGMNPAIRAFARQVMLKGAKVFAVREGYNGLVNDSIVPLNWGSVAGIISRGGTIIGTARSAEFRTREGRKRAVFNLVKNRIDNLLVIGGDGSLTGANLLRTEWCSLLEELVKDGKLTLDVMEHFPILSIAGIVGSIDNDMCGTDLTVGADTATKRILEAIDSILSTAVSHQRSFVIEVMGRNCGWLALASGVATGADYILIPESPPDDGWEQTMADNLERGRLSGRRCSLVIVSEGAIDRQGKPITSAYVRQFLEDKGHDARITILGHVQRGGTPTFLDRYIATRMGIEAANYFYDSTIEQLKQPVLIGMSGMDTIRSPLMECVQKTQSIASLIKERRFNEVVDVRGGMFKEFYEIFIACSNLHRRKVESKGMGVLILHSGGPSPGMNPCVRAFTRLGIDHGYTMYGCFNGFGGLALGEIEQLHWMTVNGWSVMGGAELGTNRSIPNDSNIEAIIATLERFKINAILMFGGFNGYLGIAKLYEYREKYQQLKRISIIGAPGTIANNVPGTNISIGSDTSLNNTLDALDKIKQSAVASRRLFVVEVMGAHCGYLAAMSSLTSGAERSYIMERGITLNTLTKDLEMFVERFKREHRIGLIIKSELASNTYSTHFIYSLFKEEGKHLFDVRESILGHLQQGGTPSAIDRIFSTRLMNHYYQFLENDLKEHGHLQMNGCIGFIDGGIHYTPMQEMIEEMSDKFRRPRSQWWMDLVETSQNISVFPLDDPSSTNFEGCNSNLSEQDRPIKKSDISSPTSYSQKTFDPNVNPQFTL.

The N-terminal catalytic PFK domain 1 stretch occupies residues Met-1–Asn-426. ATP is bound by residues Gly-62, Arg-123–Ser-124, and Gly-153–Ser-156. Asp-154 contributes to the Mg(2+) binding site. Substrate-binding positions include Ser-199–Asp-201, Arg-236, Met-243–Arg-245, Glu-299, Arg-326, and His-332–Arg-335. Residue Asp-201 is the Proton acceptor of the active site. The interdomain linker stretch occupies residues Leu-427–Met-437. Positions Gly-438–Leu-834 are C-terminal regulatory PFK domain 2. Residues Arg-507, Thr-566–Asn-570, Arg-603, Met-610–Ala-612, Glu-666, Arg-692, His-698–Gln-701, and Arg-764 contribute to the beta-D-fructose 2,6-bisphosphate site. The interval Ser-799–Leu-834 is disordered. The span at Glu-803 to Asp-812 shows a compositional bias: basic and acidic residues. Residues Ile-813 to Leu-834 show a composition bias toward polar residues.

Belongs to the phosphofructokinase type A (PFKA) family. ATP-dependent PFK group I subfamily. Eukaryotic two domain clade 'E' sub-subfamily. As to quaternary structure, homotetramer. Mg(2+) serves as cofactor. Post-translationally, the N-terminus is blocked.

The protein localises to the cytoplasm. It catalyses the reaction beta-D-fructose 6-phosphate + ATP = beta-D-fructose 1,6-bisphosphate + ADP + H(+). It functions in the pathway carbohydrate degradation; glycolysis; D-glyceraldehyde 3-phosphate and glycerone phosphate from D-glucose: step 3/4. Its activity is regulated as follows. Allosterically activated by ADP, AMP, or fructose 2,6-bisphosphate, and allosterically inhibited by ATP or citrate. Functionally, catalyzes the phosphorylation of D-fructose 6-phosphate to fructose 1,6-bisphosphate by ATP, the first committing step of glycolysis. This Dictyostelium discoideum (Social amoeba) protein is ATP-dependent 6-phosphofructokinase (pfkA).